The sequence spans 240 residues: Homeobox protein DLX-4 (240 aa).

Residues Gln-80–Pro-120 are disordered. Residues His-88–Pro-110 are compositionally biased toward basic and acidic residues. Residues Leu-117–Leu-176 constitute a DNA-binding region (homeobox).

The protein belongs to the distal-less homeobox family. Expressed in leukemia cells and placenta. Also expressed in kidney and fetal liver.

The protein resides in the nucleus. In terms of biological role, may play a role in determining the production of hemoglobin S. May act as a repressor. During embryonic development, plays a role in palatogenesis. The protein is Homeobox protein DLX-4 (DLX4) of Homo sapiens (Human).